A 478-amino-acid chain; its full sequence is Transposase for insertion sequence element IS231E (478 aa).

Belongs to the transposase 11 family.

Its function is as follows. Involved in the transposition of the insertion sequence. The protein is Transposase for insertion sequence element IS231E of Bacillus thuringiensis subsp. finitimus.